The primary structure comprises 794 residues: Elongator complex protein 2 (794 aa).

13 WD repeats span residues 55-93, 98-140, 147-188, 203-244, 286-328, 337-376, 384-423, 433-472, 557-601, 604-643, 654-693, 705-751, and 759-794; these read EHTK…TTKS, GHTS…YVCF, DGFC…AGEG, GHED…KEQM, GHEG…IWLE, GNSV…PQLW, GHYG…GANP, IHGY…ENFR, GHGY…QIQK, GHQL…VSYQ, VHTR…KESS, LKNE…WKLL, and AHHL…IKLT.

It belongs to the WD repeat ELP2 family. In terms of assembly, component of the elongator complex composed of Elp1, Elp2, Elp3, Elp4, Elp5 and Elp6. The elongator complex associates with and stabilizes microtubules; efficient interaction requires the full complex.

The protein localises to the cytoplasm. Its subcellular location is the nucleus. The protein resides in the cytoskeleton. It localises to the spindle. The protein operates within tRNA modification; 5-methoxycarbonylmethyl-2-thiouridine-tRNA biosynthesis. Component of the elongator complex, which is required for multiple tRNA modifications, including mcm5U (5-methoxycarbonylmethyl uridine), mcm5s2U (5-methoxycarbonylmethyl-2-thiouridine), and ncm5U (5-carbamoylmethyl uridine). The elongator complex catalyzes the formation of carboxymethyluridine in the wobble base at position 34 in tRNAs. Binding by the elongator complex stabilizes microtubules and promotes their growth. This induces central spindle asymmetry, promoting polarized signaling endosome trafficking during asymmetric cell division and cell fate assignation of sensory organ precursor cells. Involved in the regulation of the STAT pathway. This chain is Elongator complex protein 2, found in Drosophila melanogaster (Fruit fly).